The primary structure comprises 187 residues: Transcription antitermination protein NusB (187 aa).

The segment at 135–187 (APAPESVAEEADEESSDSDAAASDPTDEGDVSDSSGASDEPAAPSAEIQPTVD) is disordered. Residues 141–151 (VAEEADEESSD) show a composition bias toward acidic residues.

Belongs to the NusB family.

In terms of biological role, involved in transcription antitermination. Required for transcription of ribosomal RNA (rRNA) genes. Binds specifically to the boxA antiterminator sequence of the ribosomal RNA (rrn) operons. This chain is Transcription antitermination protein NusB, found in Bifidobacterium longum subsp. infantis (strain ATCC 15697 / DSM 20088 / JCM 1222 / NCTC 11817 / S12).